Consider the following 170-residue polypeptide: Ureidoglycolate lyase (170 aa).

Belongs to the ureidoglycolate lyase family. In terms of assembly, homodimer. Ni(2+) is required as a cofactor.

The catalysed reaction is (S)-ureidoglycolate = urea + glyoxylate. It functions in the pathway nitrogen metabolism; (S)-allantoin degradation. Its function is as follows. Catalyzes the catabolism of the allantoin degradation intermediate (S)-ureidoglycolate, generating urea and glyoxylate. Involved in the utilization of allantoin as nitrogen source. The sequence is that of Ureidoglycolate lyase from Pseudomonas syringae pv. syringae (strain B728a).